Here is a 171-residue protein sequence, read N- to C-terminus: MKKITVIQGDITKVSAEAIVNAANSSLLGGGGVDGAIHRAGGPVILAECQLIRNRQGGCKVGDAVITGAGNLPADYVIHTVGPRWSDGRHDEDALLKRAYQSCFKLVDYHGIKTVSFPNISTGIYGFPKERAATIALDVIKHCIAENRTLENVNLVCFDAENYDLYLKLLN.

The region spanning 1–171 (MKKITVIQGD…NYDLYLKLLN (171 aa)) is the Macro domain. Substrate contacts are provided by residues 10–11 (DI), Asn-24, 32–34 (GVD), and 121–125 (STGIY). Residue Asp-34 is the Proton acceptor of the active site.

Belongs to the MacroD-type family. YmdB subfamily. In terms of assembly, homodimer. Interacts with RNase III.

It catalyses the reaction 3''-O-acetyl-ADP-D-ribose + H2O = ADP-D-ribose + acetate + H(+). It carries out the reaction 2''-O-acetyl-ADP-D-ribose + H2O = ADP-D-ribose + acetate + H(+). In terms of biological role, deacetylates O-acetyl-ADP ribose to yield ADP-ribose and free acetate. Down-regulates ribonuclease 3 (RNase III) activity. Acts by interacting directly with the region of the ribonuclease that is required for dimerization/activation. This chain is O-acetyl-ADP-ribose deacetylase 1, found in Pantoea vagans (strain C9-1) (Pantoea agglomerans (strain C9-1)).